Here is a 182-residue protein sequence, read N- to C-terminus: NADH-quinone oxidoreductase subunit I (182 aa).

2 consecutive 4Fe-4S ferredoxin-type domains span residues 52–82 (LTRD…LQKA) and 92–121 (DFFR…LTPD). The [4Fe-4S] cluster site is built by cysteine 62, cysteine 65, cysteine 68, cysteine 72, cysteine 101, cysteine 104, cysteine 107, and cysteine 111.

This sequence belongs to the complex I 23 kDa subunit family. NDH-1 is composed of 13 different subunits. Subunits NuoA, H, J, K, L, M, N constitute the membrane sector of the complex. [4Fe-4S] cluster is required as a cofactor.

The protein localises to the cell inner membrane. The enzyme catalyses a quinone + NADH + 5 H(+)(in) = a quinol + NAD(+) + 4 H(+)(out). Its function is as follows. NDH-1 shuttles electrons from NADH, via FMN and iron-sulfur (Fe-S) centers, to quinones in the respiratory chain. The immediate electron acceptor for the enzyme in this species is believed to be ubiquinone. Couples the redox reaction to proton translocation (for every two electrons transferred, four hydrogen ions are translocated across the cytoplasmic membrane), and thus conserves the redox energy in a proton gradient. The protein is NADH-quinone oxidoreductase subunit I of Pseudomonas fluorescens (strain Pf0-1).